Here is a 485-residue protein sequence, read N- to C-terminus: Rhamnulokinase (485 aa).

12–16 contacts ATP; the sequence is ATSGR. Residues Gly-80 and 238–240 contribute to the substrate site; that span reads HDT. Catalysis depends on Asp-239, which acts as the Proton acceptor. Thr-261 contributes to the ATP binding site. Residue Asn-298 coordinates substrate. Glu-306 lines the ATP pocket. Cys-355 and Cys-372 are disulfide-bonded. An ATP-binding site is contributed by Gly-404.

Belongs to the rhamnulokinase family. Mg(2+) is required as a cofactor.

It catalyses the reaction L-rhamnulose + ATP = L-rhamnulose 1-phosphate + ADP + H(+). It participates in carbohydrate degradation; L-rhamnose degradation; glycerone phosphate from L-rhamnose: step 2/3. In terms of biological role, involved in the catabolism of L-rhamnose (6-deoxy-L-mannose). Catalyzes the transfer of the gamma-phosphate group from ATP to the 1-hydroxyl group of L-rhamnulose to yield L-rhamnulose 1-phosphate. The chain is Rhamnulokinase from Bacteroides thetaiotaomicron (strain ATCC 29148 / DSM 2079 / JCM 5827 / CCUG 10774 / NCTC 10582 / VPI-5482 / E50).